We begin with the raw amino-acid sequence, 84 residues long: Seminal ribonuclease (84 aa).

3 disulfides stabilise this stretch: Cys-10/Cys-65, Cys-28/Cys-80, and Cys-35/Cys-42. Substrate contacts are provided by residues 11 to 15 (KPVNT), Lys-36, and Arg-55.

It belongs to the pancreatic ribonuclease family. As to quaternary structure, homodimer; disulfide-linked.

The protein resides in the secreted. The catalysed reaction is an [RNA] containing cytidine + H2O = an [RNA]-3'-cytidine-3'-phosphate + a 5'-hydroxy-ribonucleotide-3'-[RNA].. The enzyme catalyses an [RNA] containing uridine + H2O = an [RNA]-3'-uridine-3'-phosphate + a 5'-hydroxy-ribonucleotide-3'-[RNA].. The protein is Seminal ribonuclease (SRN) of Giraffa camelopardalis (Giraffe).